A 237-amino-acid polypeptide reads, in one-letter code: Ribosomal RNA small subunit methyltransferase G (237 aa).

S-adenosyl-L-methionine-binding positions include Gly78, Phe83, 129–130 (AE), and Arg148.

The protein belongs to the methyltransferase superfamily. RNA methyltransferase RsmG family.

It is found in the cytoplasm. Functionally, specifically methylates the N7 position of a guanine in 16S rRNA. The sequence is that of Ribosomal RNA small subunit methyltransferase G from Streptococcus pyogenes serotype M18 (strain MGAS8232).